The sequence spans 327 residues: Glycerol-3-phosphate dehydrogenase [NAD(P)+] (327 aa).

Positions 15, 35, and 109 each coordinate NADPH. Positions 109, 137, and 139 each coordinate sn-glycerol 3-phosphate. A141 is an NADPH binding site. Residues K192, D245, S255, R256, and N257 each contribute to the sn-glycerol 3-phosphate site. Residue K192 is the Proton acceptor of the active site. R256 serves as a coordination point for NADPH. NADPH-binding residues include L275 and E277.

It belongs to the NAD-dependent glycerol-3-phosphate dehydrogenase family.

The protein resides in the cytoplasm. It catalyses the reaction sn-glycerol 3-phosphate + NAD(+) = dihydroxyacetone phosphate + NADH + H(+). The enzyme catalyses sn-glycerol 3-phosphate + NADP(+) = dihydroxyacetone phosphate + NADPH + H(+). It participates in membrane lipid metabolism; glycerophospholipid metabolism. Its function is as follows. Catalyzes the reduction of the glycolytic intermediate dihydroxyacetone phosphate (DHAP) to sn-glycerol 3-phosphate (G3P), the key precursor for phospholipid synthesis. This chain is Glycerol-3-phosphate dehydrogenase [NAD(P)+], found in Chelativorans sp. (strain BNC1).